Reading from the N-terminus, the 464-residue chain is L-2-hydroxyglutarate dehydrogenase, mitochondrial (464 aa).

Residues 1–52 constitute a mitochondrion transit peptide; sequence MWPTLRYVGGVCGLARYCVAGGFLRASGPASGVPGLLCGGGRRSSSTSSFDI. An N6-acetyllysine mark is found at lysine 105 and lysine 174.

It belongs to the L2HGDH family. Requires FAD as cofactor.

The protein resides in the mitochondrion. It catalyses the reaction (S)-2-hydroxyglutarate + A = 2-oxoglutarate + AH2. This Mus musculus (Mouse) protein is L-2-hydroxyglutarate dehydrogenase, mitochondrial (L2hgdh).